The sequence spans 507 residues: ATP-dependent RNA helicase DDX47 (507 aa).

The segment covering 1–31 has biased composition (acidic residues); it reads MSETSEDEQTQLQTSDEEEDLGSEEEQEDED. The disordered stretch occupies residues 1-58; sequence MSETSEDEQTQLQTSDEEEDLGSEEEQEDEDNNHKEGDSEAALSGEDDKGSEDDAAEE. The Q motif motif lies at 61–89; the sequence is LTWKDLGLNEALCQACDELKWKAPSKIQR. Residues 92–263 form the Helicase ATP-binding domain; it reads IPVALQGKDV…RASLKDPVKV (172 aa). ATP is bound at residue 105-112; that stretch reads AETGSGKT. Residues 211–214 carry the DEAD box motif; the sequence is DEAD. Residues 290-434 form the Helicase C-terminal domain; it reads YLVHILNELA…LYKCEEDEVM (145 aa). Residues 426-453 are a coiled coil; the sequence is YKCEEDEVMALQERVAEAQRTAKLELKD. Positions 451–471 are enriched in basic and acidic residues; it reads LKDLEDTRGGHKRGGDTHDDS. The disordered stretch occupies residues 451-507; it reads LKDLEDTRGGHKRGGDTHDDSENFTGARKRMKPMGGTGGGGRKSFGKKNWSKGKQKR. Positions 494 to 507 are enriched in basic residues; sequence SFGKKNWSKGKQKR.

It belongs to the DEAD box helicase family. DDX47/RRP3 subfamily.

The protein resides in the nucleus. The protein localises to the nucleolus. It carries out the reaction ATP + H2O = ADP + phosphate + H(+). Its function is as follows. Part of a translational control module, also containing ath/DHX33 and ais/DDX52, which coordinates germline stem cell differentiation with ribosome biogenesis during oogenesis. This module allows for coregulation of ribosomal proteins and non1/GTPBP4, a p53 repressor, preventing p53 stabilization, cell cycle arrest and loss of stem cell differentiation. With atos, adjusts transcription and translation of a subset of OXPHOS genes in macrophages to increase mitochondrial bioenergetics and allow tissue invasion. This Drosophila melanogaster (Fruit fly) protein is ATP-dependent RNA helicase DDX47.